The following is a 336-amino-acid chain: MKFVDSATVFVQAGDGGRGCVSFRREKYVPKGGPDGGDGGDGGNVWLRTNSHLTTLLDFKYRKKYLAPRGAHGMGSRKAGRKGKDIVIDVPIGTLVRNAESMEVIADLTRPDEEIMIARGGHGGRGNQHFATSTNQAPRRSEPGWKGEELELAMELKLMADVGLVGFPNAGKSTLISVLSAARPKIADYPFTTLVPNLGIVRYEEYKSFVMADIPGIIEGAAEGRGLGLQFLRHIERTKILALLVSADSPDILAEYGTLVAELEKFGHGLIQKPRLLVVTKMDIAPGDFVVPEAPEGVGLIAVSSVAGKGMKELKDELWRQVSLCERQAEPPEDGE.

The Obg domain occupies 1–159 (MKFVDSATVF…LELAMELKLM (159 aa)). Residues 120–143 (GGHGGRGNQHFATSTNQAPRRSEP) are disordered. Residues 129–138 (HFATSTNQAP) are compositionally biased toward polar residues. Positions 160–323 (ADVGLVGFPN…LKDELWRQVS (164 aa)) constitute an OBG-type G domain. GTP contacts are provided by residues 166 to 173 (GFPNAGKS), 191 to 195 (FTTLV), 213 to 216 (DIPG), 280 to 283 (TKMD), and 304 to 306 (SSV). Positions 173 and 193 each coordinate Mg(2+).

The protein belongs to the TRAFAC class OBG-HflX-like GTPase superfamily. OBG GTPase family. In terms of assembly, monomer. The cofactor is Mg(2+).

The protein localises to the cytoplasm. Functionally, an essential GTPase which binds GTP, GDP and possibly (p)ppGpp with moderate affinity, with high nucleotide exchange rates and a fairly low GTP hydrolysis rate. Plays a role in control of the cell cycle, stress response, ribosome biogenesis and in those bacteria that undergo differentiation, in morphogenesis control. This Chlorobium phaeovibrioides (strain DSM 265 / 1930) (Prosthecochloris vibrioformis (strain DSM 265)) protein is GTPase Obg.